The following is a 177-amino-acid chain: Olfactory protein (177 aa).

Residues 1–17 (MIRIIAIVVLFFLQCQA) form the signal peptide. Cysteine 81 and cysteine 174 form a disulfide bridge.

It belongs to the calycin superfamily. Lipocalin family. Synthesized in Bowman glands, which secrete the mucus that bathes the cilia of the olfactory neuroepithelium.

It localises to the secreted. This Lithobates pipiens (Northern leopard frog) protein is Olfactory protein.